A 557-amino-acid chain; its full sequence is 2-succinyl-5-enolpyruvyl-6-hydroxy-3-cyclohexene-1-carboxylate synthase (557 aa).

The tract at residues 183–206 (YGGTEHPPVAPPLPPRRAPRAAAP) is disordered.

Belongs to the TPP enzyme family. MenD subfamily. Homodimer. The cofactor is Mg(2+). Requires Mn(2+) as cofactor. Thiamine diphosphate serves as cofactor.

The catalysed reaction is isochorismate + 2-oxoglutarate + H(+) = 5-enolpyruvoyl-6-hydroxy-2-succinyl-cyclohex-3-ene-1-carboxylate + CO2. It participates in quinol/quinone metabolism; 1,4-dihydroxy-2-naphthoate biosynthesis; 1,4-dihydroxy-2-naphthoate from chorismate: step 2/7. It functions in the pathway quinol/quinone metabolism; menaquinone biosynthesis. Functionally, catalyzes the thiamine diphosphate-dependent decarboxylation of 2-oxoglutarate and the subsequent addition of the resulting succinic semialdehyde-thiamine pyrophosphate anion to isochorismate to yield 2-succinyl-5-enolpyruvyl-6-hydroxy-3-cyclohexene-1-carboxylate (SEPHCHC). In Halorhodospira halophila (strain DSM 244 / SL1) (Ectothiorhodospira halophila (strain DSM 244 / SL1)), this protein is 2-succinyl-5-enolpyruvyl-6-hydroxy-3-cyclohexene-1-carboxylate synthase.